The primary structure comprises 364 residues: MEKQILLLPGDGIGPEIIAETKRVLEEIARLYHHTFQFVEGRIGGDAIDATGSPLPEETLDLAKGSDAILLGAVGGPKWDGNAPEKRPEKGLLQIRKALGLYANLRPVRVLKPLMGASTLKEEVLADVDLLIVRELTGGLYFGEPRERRQINGEDGAVDTLLYTRGEIERIVHQAFQFARTRKKRVVSVDKANVLESSRLWREIADEVAREYPDVTLSHMLVDNAAMQLIRDPRQFDVIVTENLFGDILSDEASMITGSLGLLPSASMNTSKVGLFEPVHGSAPDIAGTGAANPLATILSAAMMLQYSFGLADEAKAIEVAVDRVLAQGVRTKDIAKASENAVSTTAITNAVMEALALKSASSR.

76–89 lines the NAD(+) pocket; the sequence is GPKWDGNAPEKRPE. Substrate is bound by residues arginine 96, arginine 106, arginine 134, and aspartate 223. Aspartate 223, aspartate 247, and aspartate 251 together coordinate Mg(2+). 281 to 293 is an NAD(+) binding site; the sequence is GSAPDIAGTGAAN.

The protein belongs to the isocitrate and isopropylmalate dehydrogenases family. LeuB type 1 subfamily. Homodimer. The cofactor is Mg(2+). Requires Mn(2+) as cofactor.

The protein resides in the cytoplasm. It catalyses the reaction (2R,3S)-3-isopropylmalate + NAD(+) = 4-methyl-2-oxopentanoate + CO2 + NADH. It participates in amino-acid biosynthesis; L-leucine biosynthesis; L-leucine from 3-methyl-2-oxobutanoate: step 3/4. Catalyzes the oxidation of 3-carboxy-2-hydroxy-4-methylpentanoate (3-isopropylmalate) to 3-carboxy-4-methyl-2-oxopentanoate. The product decarboxylates to 4-methyl-2 oxopentanoate. The protein is 3-isopropylmalate dehydrogenase of Shouchella clausii (strain KSM-K16) (Alkalihalobacillus clausii).